Here is a 175-residue protein sequence, read N- to C-terminus: MTLNTVLSGKNIPEDIYVIIEISAHSNPIKYEVNKDLGLLFVDRFIPVPMFYPCNYGFINKTKSNDGDPLDVLVHTPYPILPGSIIRCKPIGVLNMFDESGEDYKIIAIPHPKVCLEYSSINDICHLSPTLKQQIIHFFKHYKNLENNKWVKIIGWENKKNAEKIILSACEKFHK.

3 residues coordinate substrate: Lys30, Arg44, and Tyr56. Mg(2+) is bound by residues Asp66, Asp71, and Asp103. Tyr142 lines the substrate pocket.

Belongs to the PPase family. Homohexamer. The cofactor is Mg(2+).

Its subcellular location is the cytoplasm. The enzyme catalyses diphosphate + H2O = 2 phosphate + H(+). Its function is as follows. Catalyzes the hydrolysis of inorganic pyrophosphate (PPi) forming two phosphate ions. The polypeptide is Inorganic pyrophosphatase (Buchnera aphidicola subsp. Baizongia pistaciae (strain Bp)).